Reading from the N-terminus, the 275-residue chain is Probable dual specificity protein phosphatase DDB_G0271350 (275 aa).

In terms of domain architecture, Tyrosine-protein phosphatase spans 2 to 143 (GISMILDNFL…LCDLELKLTN (142 aa)). Catalysis depends on Cys-87, which acts as the Phosphocysteine intermediate.

This sequence belongs to the protein-tyrosine phosphatase family. Non-receptor class dual specificity subfamily.

The enzyme catalyses O-phospho-L-tyrosyl-[protein] + H2O = L-tyrosyl-[protein] + phosphate. The catalysed reaction is O-phospho-L-seryl-[protein] + H2O = L-seryl-[protein] + phosphate. It catalyses the reaction O-phospho-L-threonyl-[protein] + H2O = L-threonyl-[protein] + phosphate. Has a dual specificity toward Ser/Thr and Tyr-containing proteins. In Dictyostelium discoideum (Social amoeba), this protein is Probable dual specificity protein phosphatase DDB_G0271350.